Here is a 414-residue protein sequence, read N- to C-terminus: Histidine--tRNA ligase (414 aa).

This sequence belongs to the class-II aminoacyl-tRNA synthetase family. In terms of assembly, homodimer.

It localises to the cytoplasm. The enzyme catalyses tRNA(His) + L-histidine + ATP = L-histidyl-tRNA(His) + AMP + diphosphate + H(+). This is Histidine--tRNA ligase from Rickettsia conorii (strain ATCC VR-613 / Malish 7).